Consider the following 353-residue polypeptide: Alanine racemase (353 aa).

K33 (proton acceptor; specific for D-alanine) is an active-site residue. Position 33 is an N6-(pyridoxal phosphate)lysine (K33). R129 is a binding site for substrate. Y250 (proton acceptor; specific for L-alanine) is an active-site residue. M298 provides a ligand contact to substrate.

Belongs to the alanine racemase family. Requires pyridoxal 5'-phosphate as cofactor.

It catalyses the reaction L-alanine = D-alanine. Its pathway is amino-acid biosynthesis; D-alanine biosynthesis; D-alanine from L-alanine: step 1/1. Catalyzes the interconversion of L-alanine and D-alanine. May also act on other amino acids. The sequence is that of Alanine racemase (alr) from Aromatoleum aromaticum (strain DSM 19018 / LMG 30748 / EbN1) (Azoarcus sp. (strain EbN1)).